A 463-amino-acid chain; its full sequence is Mitochondrial dynamics protein MID49 (463 aa).

Over 1-24 (MAELQIRKKEKKSGDGIGTMVDFL) the chain is Mitochondrial intermembrane. Residues 25-47 (LANARLVLGVGGAAMLGIATLAV) form a helical membrane-spanning segment. Topologically, residues 48–463 (KRLIDRATSP…EPDDVLKRER (416 aa)) are cytoplasmic. Residues 87–119 (TLRRKEDLEHHCAPLSLPDPSQKMPEATGTSQV) are disordered. Positions 89 to 98 (RRKEDLEHHC) are enriched in basic and acidic residues.

This sequence belongs to the MID49/MID51 family.

The protein localises to the mitochondrion outer membrane. Its function is as follows. Mitochondrial outer membrane protein which regulates mitochondrial organization. It is required for mitochondrial fission and promotes the recruitment and association of the fission mediator dynamin-related protein 1 (DNM1L) to the mitochondrial surface independently of the mitochondrial fission FIS1 and MFF proteins. Regulates DNM1L GTPase activity. The chain is Mitochondrial dynamics protein MID49 (mief2) from Xenopus laevis (African clawed frog).